Consider the following 1028-residue polypeptide: Endosome/lysosome-associated apoptosis and autophagy regulator family member 2 (1028 aa).

Positions 1–47 (MLLLTLRRAKGRDRGRPAGGPRRALSLPWSPAWICCWALAGCQAVWA) are cleaved as a signal peptide. Topologically, residues 48–928 (GDSSSSGRPL…TCETVDFWLK (881 aa)) are extracellular. A glycan (N-linked (GlcNAc...) asparagine) is linked at Asn-168. 3 disulfides stabilise this stretch: Cys-292–Cys-309, Cys-322–Cys-345, and Cys-325–Cys-357. Residues Asn-404 and Asn-690 are each glycosylated (N-linked (GlcNAc...) asparagine). Residues 671-876 (SDCFFYHEKE…LWESAEACPL (206 aa)) enclose the MRH domain. Cystine bridges form between Cys-673-Cys-719, Cys-729-Cys-757, Cys-826-Cys-862, and Cys-838-Cys-874. A helical transmembrane segment spans residues 929-949 (VGAGVGAFTAVLLVALTCYFW). The Cytoplasmic portion of the chain corresponds to 950–1028 (KKNQKLEYKY…QLKSSRCPNI (79 aa)). The residue at position 1017 (Ser-1017) is a Phosphoserine.

It belongs to the ELAPOR family.

The protein resides in the cell membrane. Its function is as follows. Functions as a regulator of the BMP signaling pathway and may be involved in epidermal differentiation. This Mus musculus (Mouse) protein is Endosome/lysosome-associated apoptosis and autophagy regulator family member 2.